The primary structure comprises 516 residues: D-alanine--D-alanyl carrier protein ligase (516 aa).

156-157 (TS) serves as a coordination point for ATP. Aspartate 203 is a D-alanine binding site. ATP is bound at residue 298 to 303 (NAYGPT). Valine 307 provides a ligand contact to D-alanine. Residues aspartate 389, 401 to 404 (YGGR), and lysine 503 contribute to the ATP site. Lysine 503 contributes to the D-alanine binding site.

This sequence belongs to the ATP-dependent AMP-binding enzyme family. DltA subfamily.

Its subcellular location is the cytoplasm. The enzyme catalyses holo-[D-alanyl-carrier protein] + D-alanine + ATP = D-alanyl-[D-alanyl-carrier protein] + AMP + diphosphate. It functions in the pathway cell wall biogenesis; lipoteichoic acid biosynthesis. Functionally, catalyzes the first step in the D-alanylation of lipoteichoic acid (LTA), the activation of D-alanine and its transfer onto the D-alanyl carrier protein (Dcp) DltC. In an ATP-dependent two-step reaction, forms a high energy D-alanyl-AMP intermediate, followed by transfer of the D-alanyl residue as a thiol ester to the phosphopantheinyl prosthetic group of the Dcp. D-alanylation of LTA plays an important role in modulating the properties of the cell wall in Gram-positive bacteria, influencing the net charge of the cell wall. This Streptococcus pneumoniae serotype 4 (strain ATCC BAA-334 / TIGR4) protein is D-alanine--D-alanyl carrier protein ligase.